A 116-amino-acid polypeptide reads, in one-letter code: Non-specific lipid-transfer protein (116 aa).

The signal sequence occupies residues 1–25 (MASMVMNVLCVAVACMVFSASYADA). 4 cysteine pairs are disulfide-bonded: C28–C75, C38–C52, C53–C98, and C73–C112.

The protein belongs to the plant LTP family.

Plant non-specific lipid-transfer proteins transfer phospholipids as well as galactolipids across membranes. May play a role in wax or cutin deposition in the cell walls of expanding epidermal cells and certain secretory tissues. In Gerbera hybrida (Daisy), this protein is Non-specific lipid-transfer protein.